Here is a 292-residue protein sequence, read N- to C-terminus: MSKAFHSIGLIGKPHHSGTHKTLKRLHHWLTMQSYDVYVEERVAAEIGPQVKSVDLLQIGEYCDLAIVVGGDGNMLGAARVLARFDIGVIGVNRGNLGFLTDLPPDTFEEALGKVLQGEYETEHRFLLESEVHRHGEMKSSNTAVNEAVLHPGKIAHMIEFEVYIDDKFMYSQRADGMIVSTPTGSTAYSLSAGGAILTPNLEALILVPMFPHTLSCRPIVVDACSIIKLVVSPDNGDALEVSCDGHVTLPVLPGDEIIVRRSKERLRLIHPKGYNYFHVLRNKLGWGSKLF.

Residue D72 is the Proton acceptor of the active site. Residues D72–G73, N146–E147, H157, R174, D176, and T187–S192 contribute to the NAD(+) site.

The protein belongs to the NAD kinase family. A divalent metal cation serves as cofactor.

It is found in the cytoplasm. The enzyme catalyses NAD(+) + ATP = ADP + NADP(+) + H(+). In terms of biological role, involved in the regulation of the intracellular balance of NAD and NADP, and is a key enzyme in the biosynthesis of NADP. Catalyzes specifically the phosphorylation on 2'-hydroxyl of the adenosine moiety of NAD to yield NADP. The protein is NAD kinase of Shewanella loihica (strain ATCC BAA-1088 / PV-4).